We begin with the raw amino-acid sequence, 333 residues long: Dipeptide transport system permease protein DppB (333 aa).

The next 6 membrane-spanning stretches (helical) occupy residues 9–29 (ILMV…LVHF), 103–123 (AFFA…IAAV), 136–156 (ASLT…ILYV), 197–217 (AVKS…AIIT), 256–276 (LIPV…GAVL), and 306–326 (VLII…LYGV). In terms of domain architecture, ABC transmembrane type-1 spans 96-328 (FPATAELAFF…TVDLLYGVVN (233 aa)).

This sequence belongs to the binding-protein-dependent transport system permease family. OppBC subfamily.

The protein resides in the cell inner membrane. Functionally, part of the ABC transporter DppBCDF involved in dipeptide transport. Responsible for the translocation of the substrate across the membrane. In Haemophilus influenzae (strain ATCC 51907 / DSM 11121 / KW20 / Rd), this protein is Dipeptide transport system permease protein DppB (dppB).